The chain runs to 733 residues: ATP-dependent RNA helicase DBP7 (733 aa).

Disordered stretches follow at residues 1-92 and 119-139; these read MDED…SKMI and SSQLKVTKESDEKTYLPSNAP. Residues 17 to 30 show a composition bias toward polar residues; the sequence is SVSSGSNKRTTSKV. A compositionally biased stretch (basic and acidic residues) spans 52 to 80; that stretch reads QKKDRSATGKDDGKKHENDESNDSKKRPT. The Q motif motif lies at 144–173; that stretch reads STFEGLGINERLSKHLTETLRFKNPTKVQK. A Helicase ATP-binding domain is found at 177–372; sequence PTMLSTERDL…SIILNNPEMI (196 aa). 190 to 197 contacts ATP; it reads AQTGSGKT. Residues 304–307 carry the DEAD box motif; that stretch reads DEGD. The 191-residue stretch at 406-596 folds into the Helicase C-terminal domain; that stretch reads TLSAILKKIS…NYENYLKDGF (191 aa). The interval 687–714 is disordered; that stretch reads KKLGKSVESNSGIQGASKKTKKEDPRKK.

This sequence belongs to the DEAD box helicase family. DDX31/DBP7 subfamily.

The protein resides in the nucleus. It localises to the nucleolus. The enzyme catalyses ATP + H2O = ADP + phosphate + H(+). Its function is as follows. ATP-binding RNA helicase involved in the biogenesis of 60S ribosomal subunits and is required for the normal formation of 25S and 5.8S rRNAs. This Scheffersomyces stipitis (strain ATCC 58785 / CBS 6054 / NBRC 10063 / NRRL Y-11545) (Yeast) protein is ATP-dependent RNA helicase DBP7 (DPB7).